A 314-amino-acid polypeptide reads, in one-letter code: MKKLTIIFAGTAYFSMRYLDALTKSEHKVIAVITQPDRPSGRGQKIIFSPVKILSIKRNIPIFQPSELKNEKIQREIFNLNADMMIVVSYGKLIPKEILTMFPKGCINVHTSLLPRWRGATPIQSAILFGDKETGISIIKMNEKMDAGTIINSVKCNILPNDTTETLTFKLIEIGIQVLLKTLYYINKNIVVEKEQNEKHATFSKKISKKDALLNWNTEAYLLERLIRAFNPWPVCYFIVNQIAIRVWQAKIIPTVMKSACVGEIVAFNKNGIQINTAHQILNLQKIQFPGKKIINVEKIISSKKHWFHIGKII.

Residue 112–115 (SLLP) coordinates (6S)-5,6,7,8-tetrahydrofolate.

It belongs to the Fmt family.

It catalyses the reaction L-methionyl-tRNA(fMet) + (6R)-10-formyltetrahydrofolate = N-formyl-L-methionyl-tRNA(fMet) + (6S)-5,6,7,8-tetrahydrofolate + H(+). Functionally, attaches a formyl group to the free amino group of methionyl-tRNA(fMet). The formyl group appears to play a dual role in the initiator identity of N-formylmethionyl-tRNA by promoting its recognition by IF2 and preventing the misappropriation of this tRNA by the elongation apparatus. This Buchnera aphidicola subsp. Schizaphis graminum (strain Sg) protein is Methionyl-tRNA formyltransferase.